Here is a 380-residue protein sequence, read N- to C-terminus: Epoxyqueuosine reductase (380 aa).

Asp-134 acts as the Proton donor in catalysis. One can recognise a 4Fe-4S ferredoxin-type 1 domain in the interval 178-208 (FPPDKPIEDQCGGCTKCIDICPTGALIQGGQ). [4Fe-4S] cluster contacts are provided by Cys-188, Cys-191, Cys-194, Cys-198, Cys-214, Cys-240, Cys-243, and Cys-247. The 33-residue stretch at 226–258 (PEEYRDKIGNRIYGCDTCQTVCPKNKGMDFHNH) folds into the 4Fe-4S ferredoxin-type 2 domain.

This sequence belongs to the QueG family. Monomer. The cofactor is cob(II)alamin. It depends on [4Fe-4S] cluster as a cofactor.

The protein resides in the cytoplasm. The catalysed reaction is epoxyqueuosine(34) in tRNA + AH2 = queuosine(34) in tRNA + A + H2O. The protein operates within tRNA modification; tRNA-queuosine biosynthesis. Catalyzes the conversion of epoxyqueuosine (oQ) to queuosine (Q), which is a hypermodified base found in the wobble positions of tRNA(Asp), tRNA(Asn), tRNA(His) and tRNA(Tyr). The polypeptide is Epoxyqueuosine reductase (Bacillus cereus (strain ATCC 14579 / DSM 31 / CCUG 7414 / JCM 2152 / NBRC 15305 / NCIMB 9373 / NCTC 2599 / NRRL B-3711)).